The sequence spans 398 residues: NADH-quinone oxidoreductase subunit D (398 aa).

It belongs to the complex I 49 kDa subunit family. NDH-1 is composed of 14 different subunits. Subunits NuoB, C, D, E, F, and G constitute the peripheral sector of the complex.

The protein localises to the cell inner membrane. It catalyses the reaction a quinone + NADH + 5 H(+)(in) = a quinol + NAD(+) + 4 H(+)(out). In terms of biological role, NDH-1 shuttles electrons from NADH, via FMN and iron-sulfur (Fe-S) centers, to quinones in the respiratory chain. The immediate electron acceptor for the enzyme in this species is believed to be ubiquinone. Couples the redox reaction to proton translocation (for every two electrons transferred, four hydrogen ions are translocated across the cytoplasmic membrane), and thus conserves the redox energy in a proton gradient. The chain is NADH-quinone oxidoreductase subunit D from Rhodospirillum centenum (strain ATCC 51521 / SW).